We begin with the raw amino-acid sequence, 211 residues long: MLRQSCSFPVTSLPALGGVCGREGAGAEVPPAACGCEGRDPDTERSCGRSSTGGCSPCSGPGPSSPRTSRGALSPSLGRLFPHLQVVIKLRIQLAPAVHLALPTCSLLTSSPPLEGCCHRLNEEAEVQRGFRPIAVELEFENQPLGAETRLRNGRRAGVKRSEGRGQVRPGQVRSTGPEGGLTRMERKAARLQWDSGSIKMSENEQLWEEP.

Disordered stretches follow at residues 45-74 (RSCGRSSTGGCSPCSGPGPSSPRTSRGALS) and 147-211 (AETR…WEEP). A compositionally biased stretch (low complexity) spans 48–71 (GRSSTGGCSPCSGPGPSSPRTSRG). The span at 195–205 (DSGSIKMSENE) shows a compositional bias: polar residues.

This is an uncharacterized protein from Homo sapiens (Human).